Reading from the N-terminus, the 282-residue chain is Protoheme IX farnesyltransferase (282 aa).

The next 9 membrane-spanning stretches (helical) occupy residues 9–29 (LAKP…FLLA), 39–59 (LPLF…GCVF), 79–99 (LVTG…LLIL), 102–122 (LVLY…GFIV), 139–159 (VLGG…VVNI), 165–185 (LALF…IAML), 210–230 (IMLF…VLGS), 231–251 (ADLF…YKSI), and 261–281 (VFAK…CLTM).

The protein belongs to the UbiA prenyltransferase family. Protoheme IX farnesyltransferase subfamily.

It localises to the cell inner membrane. The catalysed reaction is heme b + (2E,6E)-farnesyl diphosphate + H2O = Fe(II)-heme o + diphosphate. It functions in the pathway porphyrin-containing compound metabolism; heme O biosynthesis; heme O from protoheme: step 1/1. In terms of biological role, converts heme B (protoheme IX) to heme O by substitution of the vinyl group on carbon 2 of heme B porphyrin ring with a hydroxyethyl farnesyl side group. In Francisella tularensis subsp. novicida (strain U112), this protein is Protoheme IX farnesyltransferase.